A 215-amino-acid chain; its full sequence is MQHDASSLPRLILASSSRYRRELLERLRAPFDVVTPEVDETPLPGETPSATALRLAAAKARAAAERVRAPHGALVIGSDQVATFDGLQIGKPGTHERALAQLQAMRGRDVEFHSALCLYDSRCGQTQIEDVVTRVRFRTLTDVELDAYLRAETPYDVAGSAKSEGLGIALLDAIDSDDPTALVGLPLIALTRMLRAAGYPLFDAPASAADGANGQ.

The active-site Proton acceptor is Asp79.

It belongs to the Maf family. YceF subfamily. A divalent metal cation is required as a cofactor.

The protein localises to the cytoplasm. It carries out the reaction N(7)-methyl-GTP + H2O = N(7)-methyl-GMP + diphosphate + H(+). Nucleoside triphosphate pyrophosphatase that hydrolyzes 7-methyl-GTP (m(7)GTP). May have a dual role in cell division arrest and in preventing the incorporation of modified nucleotides into cellular nucleic acids. This chain is 7-methyl-GTP pyrophosphatase, found in Burkholderia thailandensis (strain ATCC 700388 / DSM 13276 / CCUG 48851 / CIP 106301 / E264).